The primary structure comprises 485 residues: NADH-quinone oxidoreductase subunit N (485 aa).

14 helical membrane-spanning segments follow: residues L3–F23, H30–W50, Y67–V87, F96–S116, L120–F140, L154–F174, F202–F222, A247–L267, W271–I291, M299–G319, L332–I352, A375–L395, W411–I431, and L453–L473.

It belongs to the complex I subunit 2 family. In terms of assembly, NDH-1 is composed of 14 different subunits. Subunits NuoA, H, J, K, L, M, N constitute the membrane sector of the complex.

The protein resides in the cell membrane. It carries out the reaction a quinone + NADH + 5 H(+)(in) = a quinol + NAD(+) + 4 H(+)(out). NDH-1 shuttles electrons from NADH, via FMN and iron-sulfur (Fe-S) centers, to quinones in the respiratory chain. The immediate electron acceptor for the enzyme in this species is believed to be ubiquinone. Couples the redox reaction to proton translocation (for every two electrons transferred, four hydrogen ions are translocated across the cytoplasmic membrane), and thus conserves the redox energy in a proton gradient. This chain is NADH-quinone oxidoreductase subunit N, found in Dehalococcoides mccartyi (strain ATCC BAA-2100 / JCM 16839 / KCTC 5957 / BAV1).